Reading from the N-terminus, the 619-residue chain is TBC domain-containing protein C1952.17c (619 aa).

The 354-residue stretch at 34 to 387 (PDEYSLRAKA…RLWDSIIADQ (354 aa)) folds into the Rab-GAP TBC domain.

It is found in the cytoplasm. Its function is as follows. May act as a GTPase-activating protein for Rab family protein(s). The sequence is that of TBC domain-containing protein C1952.17c from Schizosaccharomyces pombe (strain 972 / ATCC 24843) (Fission yeast).